Here is a 252-residue protein sequence, read N- to C-terminus: Metalloprotease LoiP (252 aa).

The signal sequence occupies residues 1–18; sequence MKIRALLVAMSVATVLTG. C19 carries N-palmitoyl cysteine lipidation. C19 is lipidated: S-diacylglycerol cysteine. A disulfide bond links C53 and C108. H130 contributes to the Zn(2+) binding site. E131 is a catalytic residue. Zn(2+)-binding residues include H134 and E189. Residues 224–252 form a disordered region; that stretch reads RQSSMFDDHPASAERAQHIRDRMSADGIK.

It belongs to the peptidase M48B family. Interacts with Era and BepA. The cofactor is Zn(2+). Post-translationally, the intramolecular disulfide bond improves the stability and the activity of LoiP. It forms even in the absence of the oxido-reductase DsbA.

Its subcellular location is the cell outer membrane. Functionally, metalloprotease that cleaves substrates preferentially between Phe-Phe residues. Plays a role in response to some stress conditions. Seems to regulate the expression of speB. In Escherichia coli (strain K12), this protein is Metalloprotease LoiP (loiP).